The chain runs to 426 residues: UDP-N-acetylglucosamine 1-carboxyvinyltransferase (426 aa).

Residue 22 to 23 (KN) participates in phosphoenolpyruvate binding. UDP-N-acetyl-alpha-D-glucosamine is bound at residue Arg94. Residue Cys118 is the Proton donor of the active site. Cys118 bears the 2-(S-cysteinyl)pyruvic acid O-phosphothioketal mark. UDP-N-acetyl-alpha-D-glucosamine-binding positions include 123-127 (RPVDL), Asp310, and Ile332.

Belongs to the EPSP synthase family. MurA subfamily.

It localises to the cytoplasm. It carries out the reaction phosphoenolpyruvate + UDP-N-acetyl-alpha-D-glucosamine = UDP-N-acetyl-3-O-(1-carboxyvinyl)-alpha-D-glucosamine + phosphate. The protein operates within cell wall biogenesis; peptidoglycan biosynthesis. In terms of biological role, cell wall formation. Adds enolpyruvyl to UDP-N-acetylglucosamine. The polypeptide is UDP-N-acetylglucosamine 1-carboxyvinyltransferase (Hyphomonas neptunium (strain ATCC 15444)).